Consider the following 166-residue polypeptide: Endoribonuclease YbeY (166 aa).

Histidine 129, histidine 133, and histidine 139 together coordinate Zn(2+).

It belongs to the endoribonuclease YbeY family. It depends on Zn(2+) as a cofactor.

It localises to the cytoplasm. Its function is as follows. Single strand-specific metallo-endoribonuclease involved in late-stage 70S ribosome quality control and in maturation of the 3' terminus of the 16S rRNA. In Heliobacterium modesticaldum (strain ATCC 51547 / Ice1), this protein is Endoribonuclease YbeY.